The sequence spans 547 residues: Chaperonin GroEL (547 aa).

ATP-binding positions include 30–33 (TLGP), Lys51, 87–91 (DGTTT), Gly415, 480–482 (NAA), and Asp496. Positions 525-547 (KPDDKPAMPPMGGGMGGMGGMDF) are disordered. The span at 535–547 (MGGGMGGMGGMDF) shows a compositional bias: gly residues.

The protein belongs to the chaperonin (HSP60) family. In terms of assembly, forms a cylinder of 14 subunits composed of two heptameric rings stacked back-to-back. Interacts with the co-chaperonin GroES.

The protein localises to the cytoplasm. The catalysed reaction is ATP + H2O + a folded polypeptide = ADP + phosphate + an unfolded polypeptide.. Its function is as follows. Together with its co-chaperonin GroES, plays an essential role in assisting protein folding. The GroEL-GroES system forms a nano-cage that allows encapsulation of the non-native substrate proteins and provides a physical environment optimized to promote and accelerate protein folding. This chain is Chaperonin GroEL, found in Novosphingobium aromaticivorans (strain ATCC 700278 / DSM 12444 / CCUG 56034 / CIP 105152 / NBRC 16084 / F199).